The sequence spans 346 residues: [LysW]-lysine/[LysW]-ornithine hydrolase (346 aa).

His68 is a Zn(2+) binding site. Asp70 is a catalytic residue. Asp92 is a binding site for Zn(2+). Glu122 (proton acceptor) is an active-site residue. Zn(2+) contacts are provided by Glu123, Glu146, and His317.

The protein belongs to the peptidase M20A family. LysK subfamily. Zn(2+) is required as a cofactor. It depends on Co(2+) as a cofactor.

Its subcellular location is the cytoplasm. The enzyme catalyses [amino-group carrier protein]-C-terminal-gamma-(L-lysyl)-L-glutamate + H2O = [amino-group carrier protein]-C-terminal-L-glutamate + L-lysine. The catalysed reaction is [amino-group carrier protein]-C-terminal-gamma-(L-ornithyl)-L-glutamate + H2O = [amino-group carrier protein]-C-terminal-L-glutamate + L-ornithine. The protein operates within amino-acid biosynthesis; L-lysine biosynthesis via AAA pathway; L-lysine from L-alpha-aminoadipate (Thermus route): step 5/5. Its pathway is amino-acid biosynthesis; L-arginine biosynthesis. Catalyzes the release of L-lysine from [LysW]-gamma-L-lysine and the release of L-ornithine from [LysW]-L-ornithine. The sequence is that of [LysW]-lysine/[LysW]-ornithine hydrolase from Saccharolobus islandicus (strain M.16.27) (Sulfolobus islandicus).